Here is a 286-residue protein sequence, read N- to C-terminus: 4-diphosphocytidyl-2-C-methyl-D-erythritol kinase (286 aa).

Lysine 10 is a catalytic residue. Residue 100–110 (PMGSGLGGGSS) coordinates ATP. Aspartate 142 is a catalytic residue.

The protein belongs to the GHMP kinase family. IspE subfamily. In terms of assembly, homodimer.

The enzyme catalyses 4-CDP-2-C-methyl-D-erythritol + ATP = 4-CDP-2-C-methyl-D-erythritol 2-phosphate + ADP + H(+). Its pathway is isoprenoid biosynthesis; isopentenyl diphosphate biosynthesis via DXP pathway; isopentenyl diphosphate from 1-deoxy-D-xylulose 5-phosphate: step 3/6. In terms of biological role, catalyzes the phosphorylation of the position 2 hydroxy group of 4-diphosphocytidyl-2C-methyl-D-erythritol. In Buchnera aphidicola subsp. Acyrthosiphon pisum (strain APS) (Acyrthosiphon pisum symbiotic bacterium), this protein is 4-diphosphocytidyl-2-C-methyl-D-erythritol kinase.